Reading from the N-terminus, the 664-residue chain is ATP-dependent zinc metalloprotease FtsH (664 aa).

Topologically, residues 1–9 are cytoplasmic; sequence MKQNIKRNW. Residues 10 to 30 form a helical membrane-spanning segment; it reads IWILIVMIVIGIILYFSIRNL. Over 31–136 the chain is Extracellular; it reads FSTKVAEWSI…KSVATPQPNP (106 aa). The chain crosses the membrane as a helical span at residues 137–157; sequence FLGILISSVPVLILIFVMVWI. Residues 158 to 664 lie on the Cytoplasmic side of the membrane; that stretch reads YRSQVKMMNG…SLIEKTSKKE (507 aa). 229–236 is an ATP binding site; sequence GPPGTGKT. H451 lines the Zn(2+) pocket. The active site involves E452. 2 residues coordinate Zn(2+): H455 and D529. The segment covering 639 to 649 has biased composition (basic and acidic residues); the sequence is IEEKDLSKNSE. Positions 639–664 are disordered; that stretch reads IEEKDLSKNSEDNNLDSLIEKTSKKE.

The protein in the central section; belongs to the AAA ATPase family. This sequence in the C-terminal section; belongs to the peptidase M41 family. Homohexamer. Requires Zn(2+) as cofactor.

It localises to the cell membrane. In terms of biological role, acts as a processive, ATP-dependent zinc metallopeptidase for both cytoplasmic and membrane proteins. Plays a role in the quality control of integral membrane proteins. The sequence is that of ATP-dependent zinc metalloprotease FtsH from Mycoplasmopsis synoviae (strain 53) (Mycoplasma synoviae).